Here is a 379-residue protein sequence, read N- to C-terminus: Chaperone protein DnaJ (379 aa).

The J domain occupies 5–70; sequence DYYELLEVSR…QKRAAYDQFG (66 aa). A CR-type zinc finger spans residues 135-213; that stretch reads GKEVEITVPR…CHGQGRVRES (79 aa). Zn(2+) contacts are provided by cysteine 148, cysteine 151, cysteine 165, cysteine 168, cysteine 187, cysteine 190, cysteine 201, and cysteine 204. CXXCXGXG motif repeat units lie at residues 148 to 155, 165 to 172, 187 to 194, and 201 to 208; these read CTVCEGSG, CETCQGMG, CPTCHGEG, and CASCHGQG.

Belongs to the DnaJ family. In terms of assembly, homodimer. Zn(2+) serves as cofactor.

The protein resides in the cytoplasm. Its function is as follows. Participates actively in the response to hyperosmotic and heat shock by preventing the aggregation of stress-denatured proteins and by disaggregating proteins, also in an autonomous, DnaK-independent fashion. Unfolded proteins bind initially to DnaJ; upon interaction with the DnaJ-bound protein, DnaK hydrolyzes its bound ATP, resulting in the formation of a stable complex. GrpE releases ADP from DnaK; ATP binding to DnaK triggers the release of the substrate protein, thus completing the reaction cycle. Several rounds of ATP-dependent interactions between DnaJ, DnaK and GrpE are required for fully efficient folding. Also involved, together with DnaK and GrpE, in the DNA replication of plasmids through activation of initiation proteins. The protein is Chaperone protein DnaJ of Legionella pneumophila (strain Lens).